The chain runs to 295 residues: Nucleotide-binding protein CMS1991 (295 aa).

19–26 contributes to the ATP binding site; that stretch reads GMSGAGRS. 70 to 73 is a binding site for GTP; sequence DVRG.

It belongs to the RapZ-like family.

Functionally, displays ATPase and GTPase activities. This Clavibacter sepedonicus (Clavibacter michiganensis subsp. sepedonicus) protein is Nucleotide-binding protein CMS1991.